The sequence spans 114 residues: Large ribosomal subunit protein bL20 (114 aa).

This sequence belongs to the bacterial ribosomal protein bL20 family.

Its function is as follows. Binds directly to 23S ribosomal RNA and is necessary for the in vitro assembly process of the 50S ribosomal subunit. It is not involved in the protein synthesizing functions of that subunit. The chain is Large ribosomal subunit protein bL20 from Anaeromyxobacter dehalogenans (strain 2CP-C).